The following is an 85-amino-acid chain: uncharacterized protein (85 aa).

Positions 64–76 (DPPVRRSGGREQH) are enriched in basic and acidic residues. The disordered stretch occupies residues 64-85 (DPPVRRSGGREQHLAQVWRATS).

This is an uncharacterized protein from Mycobacterium bovis (strain ATCC BAA-935 / AF2122/97).